Consider the following 509-residue polypeptide: Photosystem II CP47 reaction center protein (509 aa).

6 helical membrane passes run 21–36 (SVHL…WAGS), 101–115 (IVLS…IWHW), 140–156 (GIHL…FGAF), 203–218 (IAAG…FHLN), 237–252 (VLSS…SFVV), and 457–472 (NFAL…HGSR).

Belongs to the PsbB/PsbC family. PsbB subfamily. PSII is composed of 1 copy each of membrane proteins PsbA, PsbB, PsbC, PsbD, PsbE, PsbF, PsbH, PsbI, PsbJ, PsbK, PsbL, PsbM, PsbT, PsbY, PsbZ, Psb30/Ycf12, at least 3 peripheral proteins of the oxygen-evolving complex and a large number of cofactors. It forms dimeric complexes. Binds multiple chlorophylls. PSII binds additional chlorophylls, carotenoids and specific lipids. is required as a cofactor.

The protein resides in the plastid. Its subcellular location is the chloroplast thylakoid membrane. Functionally, one of the components of the core complex of photosystem II (PSII). It binds chlorophyll and helps catalyze the primary light-induced photochemical processes of PSII. PSII is a light-driven water:plastoquinone oxidoreductase, using light energy to abstract electrons from H(2)O, generating O(2) and a proton gradient subsequently used for ATP formation. In Cyanidium caldarium (Red alga), this protein is Photosystem II CP47 reaction center protein.